The sequence spans 373 residues: GDP-mannose 4,6-dehydratase (373 aa).

NADP(+) contacts are provided by residues 9–14, 64–65, 86–90, and Y101; these read GVTGQD, DL, and LGAMS. T133 is an active-site residue. Catalysis depends on nucleophile residues E135 and Y157. NADP(+)-binding residues include K161, H187, and R192.

The protein belongs to the NAD(P)-dependent epimerase/dehydratase family. GDP-mannose 4,6-dehydratase subfamily. It depends on NADP(+) as a cofactor.

It catalyses the reaction GDP-alpha-D-mannose = GDP-4-dehydro-alpha-D-rhamnose + H2O. Its pathway is nucleotide-sugar biosynthesis; GDP-L-fucose biosynthesis via de novo pathway; GDP-L-fucose from GDP-alpha-D-mannose: step 1/2. In terms of biological role, catalyzes the conversion of GDP-D-mannose to GDP-4-dehydro-6-deoxy-D-mannose. This is GDP-mannose 4,6-dehydratase from Escherichia coli O157:H7.